Reading from the N-terminus, the 339-residue chain is Ketol-acid reductoisomerase (NADP(+)) (339 aa).

Positions 1 to 182 (MRVYYDRDAD…GGGRSGIIET (182 aa)) constitute a KARI N-terminal Rossmann domain. Residues 24-27 (YGSQ), Arg48, Ser51, Thr53, and 83-86 (DEHQ) each bind NADP(+). The active site involves His108. Gly134 serves as a coordination point for NADP(+). In terms of domain architecture, KARI C-terminal knotted spans 183 to 328 (NFREECETDL…ARLRGMMPWI (146 aa)). Mg(2+) is bound by residues Asp191, Glu195, Glu227, and Glu231. Ser252 is a binding site for substrate.

Belongs to the ketol-acid reductoisomerase family. It depends on Mg(2+) as a cofactor.

It carries out the reaction (2R)-2,3-dihydroxy-3-methylbutanoate + NADP(+) = (2S)-2-acetolactate + NADPH + H(+). The catalysed reaction is (2R,3R)-2,3-dihydroxy-3-methylpentanoate + NADP(+) = (S)-2-ethyl-2-hydroxy-3-oxobutanoate + NADPH + H(+). The protein operates within amino-acid biosynthesis; L-isoleucine biosynthesis; L-isoleucine from 2-oxobutanoate: step 2/4. It participates in amino-acid biosynthesis; L-valine biosynthesis; L-valine from pyruvate: step 2/4. Functionally, involved in the biosynthesis of branched-chain amino acids (BCAA). Catalyzes an alkyl-migration followed by a ketol-acid reduction of (S)-2-acetolactate (S2AL) to yield (R)-2,3-dihydroxy-isovalerate. In the isomerase reaction, S2AL is rearranged via a Mg-dependent methyl migration to produce 3-hydroxy-3-methyl-2-ketobutyrate (HMKB). In the reductase reaction, this 2-ketoacid undergoes a metal-dependent reduction by NADPH to yield (R)-2,3-dihydroxy-isovalerate. The chain is Ketol-acid reductoisomerase (NADP(+)) from Caulobacter vibrioides (strain ATCC 19089 / CIP 103742 / CB 15) (Caulobacter crescentus).